The following is a 165-amino-acid chain: Probable calcium-binding protein CML18 (165 aa).

EF-hand domains are found at residues 16–51, 52–87, 90–125, and 126–161; these read EQLA…LGLK, PSQD…DLVK, YTDD…LGHA, and LTAE…AAFD. Aspartate 29, asparagine 31, aspartate 33, serine 35, glutamate 40, aspartate 65, asparagine 67, asparagine 69, glutamate 76, aspartate 103, aspartate 105, asparagine 107, tyrosine 109, glutamate 114, aspartate 139, aspartate 141, aspartate 143, cysteine 145, and glutamate 150 together coordinate Ca(2+).

Calcium and pH-dependent interaction with NHX1 (increases when pH decreases, better at pH 5.5 than at pH 7.5). Also interacts with the CPB protein At2g18750.

Its subcellular location is the vacuole. In terms of biological role, potential calcium sensor that modulates ion selectivity of NHX1. The protein is Probable calcium-binding protein CML18 (CML18) of Arabidopsis thaliana (Mouse-ear cress).